We begin with the raw amino-acid sequence, 147 residues long: E3 ubiquitin-protein ligase RNF181 homolog (147 aa).

An RING-type; atypical zinc finger spans residues 70–111 (CSVCKEPAEEGQKYRILPCKHEFHEECILLWLKKTNSCPLCR).

This sequence belongs to the RNF181 family.

It catalyses the reaction S-ubiquitinyl-[E2 ubiquitin-conjugating enzyme]-L-cysteine + [acceptor protein]-L-lysine = [E2 ubiquitin-conjugating enzyme]-L-cysteine + N(6)-ubiquitinyl-[acceptor protein]-L-lysine.. Its pathway is protein modification; protein ubiquitination. Its function is as follows. E3 ubiquitin-protein ligase which accepts ubiquitin from an E2 ubiquitin-conjugating enzyme in the form of a thioester and then directly transfers the ubiquitin to targeted substrates. The chain is E3 ubiquitin-protein ligase RNF181 homolog from Drosophila melanogaster (Fruit fly).